Reading from the N-terminus, the 593-residue chain is Phosphoinositide phosphatase SAC6 (593 aa).

The 329-residue stretch at 128–456 (LSVAERTTGL…GDDISIQYSG (329 aa)) folds into the SAC domain. Residues 391–402 (RTNCIDCLDRTN) carry the Phosphatase catalytic core motif. Helical transmembrane passes span 526 to 546 (AVAN…FATM) and 555 to 575 (YKHL…AALV).

As to expression, predominantly expressed in flowers.

Its subcellular location is the endoplasmic reticulum membrane. Phosphoinositide phosphatase that hydrolyzes PtdIns(3)P and PtdIns(4)P. Involved in priming for different defense responses. This Arabidopsis thaliana (Mouse-ear cress) protein is Phosphoinositide phosphatase SAC6 (SAC6).